A 161-amino-acid chain; its full sequence is Phosphopantetheine adenylyltransferase (161 aa).

Ser11 contacts substrate. Residues 11 to 12 (SF) and His19 each bind ATP. Residues Lys43, Leu75, and Arg89 each coordinate substrate. ATP-binding positions include 90-92 (GLR), Glu100, and 125-131 (YSYLSSS).

It belongs to the bacterial CoaD family. Homohexamer. Mg(2+) serves as cofactor.

It localises to the cytoplasm. It carries out the reaction (R)-4'-phosphopantetheine + ATP + H(+) = 3'-dephospho-CoA + diphosphate. It participates in cofactor biosynthesis; coenzyme A biosynthesis; CoA from (R)-pantothenate: step 4/5. Reversibly transfers an adenylyl group from ATP to 4'-phosphopantetheine, yielding dephospho-CoA (dPCoA) and pyrophosphate. This chain is Phosphopantetheine adenylyltransferase, found in Geotalea daltonii (strain DSM 22248 / JCM 15807 / FRC-32) (Geobacter daltonii).